The sequence spans 586 residues: A-type ATP synthase subunit A (586 aa).

232–239 is a binding site for ATP; that stretch reads GPFGSGKT.

This sequence belongs to the ATPase alpha/beta chains family. As to quaternary structure, has multiple subunits with at least A(3), B(3), C, D, E, F, H, I and proteolipid K(x).

Its subcellular location is the cell membrane. The enzyme catalyses ATP + H2O + 4 H(+)(in) = ADP + phosphate + 5 H(+)(out). Its function is as follows. Component of the A-type ATP synthase that produces ATP from ADP in the presence of a proton gradient across the membrane. The A chain is the catalytic subunit. The chain is A-type ATP synthase subunit A from Methanococcus vannielii (strain ATCC 35089 / DSM 1224 / JCM 13029 / OCM 148 / SB).